Reading from the N-terminus, the 737-residue chain is Elongation factor 2 (737 aa).

In terms of domain architecture, tr-type G spans 18-262 (TRVRNIGIIA…AVIKFVPNPR (245 aa)). GTP-binding positions include 27–34 (AHVDHGKT), 93–97 (DTPGH), and 147–150 (NKVD). His604 carries the post-translational modification Diphthamide.

It belongs to the TRAFAC class translation factor GTPase superfamily. Classic translation factor GTPase family. EF-G/EF-2 subfamily.

The protein resides in the cytoplasm. Catalyzes the GTP-dependent ribosomal translocation step during translation elongation. During this step, the ribosome changes from the pre-translocational (PRE) to the post-translocational (POST) state as the newly formed A-site-bound peptidyl-tRNA and P-site-bound deacylated tRNA move to the P and E sites, respectively. Catalyzes the coordinated movement of the two tRNA molecules, the mRNA and conformational changes in the ribosome. The chain is Elongation factor 2 (fusA) from Sulfolobus acidocaldarius (strain ATCC 33909 / DSM 639 / JCM 8929 / NBRC 15157 / NCIMB 11770).